We begin with the raw amino-acid sequence, 620 residues long: Proline--tRNA ligase (620 aa).

Belongs to the class-II aminoacyl-tRNA synthetase family. ProS type 1 subfamily. In terms of assembly, homodimer.

It is found in the cytoplasm. The catalysed reaction is tRNA(Pro) + L-proline + ATP = L-prolyl-tRNA(Pro) + AMP + diphosphate. Catalyzes the attachment of proline to tRNA(Pro) in a two-step reaction: proline is first activated by ATP to form Pro-AMP and then transferred to the acceptor end of tRNA(Pro). As ProRS can inadvertently accommodate and process non-cognate amino acids such as alanine and cysteine, to avoid such errors it has two additional distinct editing activities against alanine. One activity is designated as 'pretransfer' editing and involves the tRNA(Pro)-independent hydrolysis of activated Ala-AMP. The other activity is designated 'posttransfer' editing and involves deacylation of mischarged Ala-tRNA(Pro). The misacylated Cys-tRNA(Pro) is not edited by ProRS. In Streptococcus suis (strain 98HAH33), this protein is Proline--tRNA ligase.